A 159-amino-acid chain; its full sequence is SsrA-binding protein (159 aa).

Residues 138–153 are compositionally biased toward basic and acidic residues; that stretch reads KREDGKDKDWSREKER. Positions 138-159 are disordered; it reads KREDGKDKDWSREKERLMKHKA.

It belongs to the SmpB family.

The protein resides in the cytoplasm. Functionally, required for rescue of stalled ribosomes mediated by trans-translation. Binds to transfer-messenger RNA (tmRNA), required for stable association of tmRNA with ribosomes. tmRNA and SmpB together mimic tRNA shape, replacing the anticodon stem-loop with SmpB. tmRNA is encoded by the ssrA gene; the 2 termini fold to resemble tRNA(Ala) and it encodes a 'tag peptide', a short internal open reading frame. During trans-translation Ala-aminoacylated tmRNA acts like a tRNA, entering the A-site of stalled ribosomes, displacing the stalled mRNA. The ribosome then switches to translate the ORF on the tmRNA; the nascent peptide is terminated with the 'tag peptide' encoded by the tmRNA and targeted for degradation. The ribosome is freed to recommence translation, which seems to be the essential function of trans-translation. This is SsrA-binding protein from Pseudoalteromonas translucida (strain TAC 125).